Here is a 309-residue protein sequence, read N- to C-terminus: uncharacterized protein (309 aa).

The 238-residue stretch at 17 to 254 (RYGQKVHKLT…AGEMIRHTPP (238 aa)) folds into the Radical SAM core domain. The [4Fe-4S] cluster site is built by cysteine 33, cysteine 45, and cysteine 48.

The protein belongs to the radical SAM superfamily. The cofactor is [4Fe-4S] cluster.

This is an uncharacterized protein from Escherichia coli O157:H7.